Here is a 283-residue protein sequence, read N- to C-terminus: Cardiolipin synthase (CMP-forming) (283 aa).

3 helical membrane passes run 83–103 (PFIG…LFAF), 155–175 (VSIA…ALFI), and 209–229 (LSKW…LLLL).

This sequence belongs to the CDP-alcohol phosphatidyltransferase class-I family. As to quaternary structure, may be found in a large complex. The cofactor is Mg(2+).

Its subcellular location is the mitochondrion inner membrane. The catalysed reaction is a CDP-1,2-diacyl-sn-glycerol + a 1,2-diacyl-sn-glycero-3-phospho-(1'-sn-glycerol) = a cardiolipin + CMP + H(+). In terms of biological role, catalyzes the synthesis of cardiolipin (CL) (diphosphatidylglycerol) by specifically transferring a phosphatidyl group from CDP-diacylglycerol to phosphatidylglycerol (PG). CL is a key phospholipid in mitochondrial membranes and plays important roles in maintaining the functional integrity and dynamics of mitochondria under both optimal and stress conditions. The sequence is that of Cardiolipin synthase (CMP-forming) (CRD1) from Saccharomyces cerevisiae (strain ATCC 204508 / S288c) (Baker's yeast).